A 48-amino-acid chain; its full sequence is ATP synthase protein 8 (48 aa).

A helical membrane pass occupies residues 12-32 (QLTYGLLLITVLLILFSQFFL).

This sequence belongs to the ATPase protein 8 family. F-type ATPases have 2 components, CF(1) - the catalytic core - and CF(0) - the membrane proton channel.

It localises to the mitochondrion membrane. Its function is as follows. Mitochondrial membrane ATP synthase (F(1)F(0) ATP synthase or Complex V) produces ATP from ADP in the presence of a proton gradient across the membrane which is generated by electron transport complexes of the respiratory chain. F-type ATPases consist of two structural domains, F(1) - containing the extramembraneous catalytic core and F(0) - containing the membrane proton channel, linked together by a central stalk and a peripheral stalk. During catalysis, ATP synthesis in the catalytic domain of F(1) is coupled via a rotary mechanism of the central stalk subunits to proton translocation. Part of the complex F(0) domain. Minor subunit located with subunit a in the membrane. The sequence is that of ATP synthase protein 8 (ATP8) from Candida glabrata (strain ATCC 2001 / BCRC 20586 / JCM 3761 / NBRC 0622 / NRRL Y-65 / CBS 138) (Yeast).